A 366-amino-acid chain; its full sequence is Tetraacyldisaccharide 4'-kinase (366 aa).

Position 51 to 58 (T51 to T58) interacts with ATP.

The protein belongs to the LpxK family.

It catalyses the reaction a lipid A disaccharide + ATP = a lipid IVA + ADP + H(+). The protein operates within glycolipid biosynthesis; lipid IV(A) biosynthesis; lipid IV(A) from (3R)-3-hydroxytetradecanoyl-[acyl-carrier-protein] and UDP-N-acetyl-alpha-D-glucosamine: step 6/6. Functionally, transfers the gamma-phosphate of ATP to the 4'-position of a tetraacyldisaccharide 1-phosphate intermediate (termed DS-1-P) to form tetraacyldisaccharide 1,4'-bis-phosphate (lipid IVA). This is Tetraacyldisaccharide 4'-kinase from Phocaeicola vulgatus (strain ATCC 8482 / DSM 1447 / JCM 5826 / CCUG 4940 / NBRC 14291 / NCTC 11154) (Bacteroides vulgatus).